Reading from the N-terminus, the 66-residue chain is Ribosome biogenesis protein Nop10 (66 aa).

It belongs to the NOP10 family.

In terms of biological role, involved in ribosome biogenesis; more specifically in 18S rRNA pseudouridylation and in cleavage of pre-rRNA. The protein is Ribosome biogenesis protein Nop10 of Desulfurococcus amylolyticus (strain DSM 18924 / JCM 16383 / VKM B-2413 / 1221n) (Desulfurococcus kamchatkensis).